Here is a 67-residue protein sequence, read N- to C-terminus: Cell division protein ZapB (67 aa).

Residues 3–59 adopt a coiled-coil conformation; that stretch reads LELLSQLETKIQTALETIELLKLELDEEKEKAANLAEQNHQLKQELSSWNDKITGLV.

The protein belongs to the ZapB family. Homodimer. The ends of the coiled-coil dimer bind to each other, forming polymers. Interacts with FtsZ.

The protein localises to the cytoplasm. Its function is as follows. Non-essential, abundant cell division factor that is required for proper Z-ring formation. It is recruited early to the divisome by direct interaction with FtsZ, stimulating Z-ring assembly and thereby promoting cell division earlier in the cell cycle. Its recruitment to the Z-ring requires functional FtsA or ZipA. In Shewanella amazonensis (strain ATCC BAA-1098 / SB2B), this protein is Cell division protein ZapB.